Reading from the N-terminus, the 351-residue chain is Dihydroorotate dehydrogenase (quinone) (351 aa).

Residues 61–65 (AGLDK) and T85 each bind FMN. Substrate is bound at residue K65. 110-114 (NRMGF) contacts substrate. FMN is bound by residues N139 and N172. N172 is a substrate binding site. S175 (nucleophile) is an active-site residue. N177 serves as a coordination point for substrate. Residues K217 and T245 each contribute to the FMN site. 246–247 (NT) contributes to the substrate binding site. FMN contacts are provided by residues G268, G297, and 318–319 (YS).

Belongs to the dihydroorotate dehydrogenase family. Type 2 subfamily. As to quaternary structure, monomer. It depends on FMN as a cofactor.

Its subcellular location is the cell membrane. The catalysed reaction is (S)-dihydroorotate + a quinone = orotate + a quinol. The protein operates within pyrimidine metabolism; UMP biosynthesis via de novo pathway; orotate from (S)-dihydroorotate (quinone route): step 1/1. Functionally, catalyzes the conversion of dihydroorotate to orotate with quinone as electron acceptor. The chain is Dihydroorotate dehydrogenase (quinone) from Xanthomonas oryzae pv. oryzae (strain PXO99A).